The primary structure comprises 185 residues: MANAIIETAKERFAQSHQSLSREYASIRAGRANASLLDRIQVDYYGAPTPLNQLASITVPEARVLLISPFDKSSIKDIERALNASDLGITPANDGSVIRLVIPALTEETRKELAKEVKKVGENAKIAIRNIRRDAMDDAKKQEKAKEITEDELKTLEKDIQKATDDAIKEIDRMTAEKEKELLSV.

Belongs to the RRF family.

The protein localises to the cytoplasm. In terms of biological role, responsible for the release of ribosomes from messenger RNA at the termination of protein biosynthesis. May increase the efficiency of translation by recycling ribosomes from one round of translation to another. The polypeptide is Ribosome-recycling factor (Streptococcus pyogenes serotype M1).